The following is a 155-amino-acid chain: S-ribosylhomocysteine lyase (155 aa).

Fe cation-binding residues include His57, His61, and Cys124.

Belongs to the LuxS family. Homodimer. Fe cation serves as cofactor.

The enzyme catalyses S-(5-deoxy-D-ribos-5-yl)-L-homocysteine = (S)-4,5-dihydroxypentane-2,3-dione + L-homocysteine. Involved in the synthesis of autoinducer 2 (AI-2) which is secreted by bacteria and is used to communicate both the cell density and the metabolic potential of the environment. The regulation of gene expression in response to changes in cell density is called quorum sensing. Catalyzes the transformation of S-ribosylhomocysteine (RHC) to homocysteine (HC) and 4,5-dihydroxy-2,3-pentadione (DPD). This Listeria monocytogenes serovar 1/2a (strain ATCC BAA-679 / EGD-e) protein is S-ribosylhomocysteine lyase.